A 233-amino-acid polypeptide reads, in one-letter code: 5-demethoxyubiquinone hydroxylase, mitochondrial (233 aa).

A mitochondrion-targeting transit peptide spans 1-15 (MLSRVSVFKPASRGF). Phosphoserine is present on residues serine 20 and serine 28. Threonine 32 bears the Phosphothreonine mark. Residues glutamate 63, glutamate 95, histidine 98, glutamate 147, glutamate 194, and histidine 197 each coordinate Fe cation.

The protein belongs to the COQ7 family. In terms of assembly, component of a multi-subunit COQ enzyme complex, composed of at least COQ3, COQ4, COQ5, COQ6, COQ7 and COQ9. Requires Fe cation as cofactor. Post-translationally, phosphorylated. Dephosphorylated by PTC7; dephosphorylation is essential for enzyme activation.

It localises to the mitochondrion inner membrane. The enzyme catalyses a 5-methoxy-2-methyl-3-(all-trans-polyprenyl)benzene-1,4-diol + AH2 + O2 = a 3-demethylubiquinol + A + H2O. The catalysed reaction is a 5-methoxy-2-methyl-3-(all-trans-polyprenyl)benzoquinone + NADH + O2 = a 3-demethylubiquinone + NAD(+) + H2O. Its pathway is cofactor biosynthesis; ubiquinone biosynthesis. With respect to regulation, dephosphorylation by PTC7 leads to activation. Functionally, catalyzes the hydroxylation of 2-hexaprenyl-3-methyl-6-methoxy-1,4-benzoquinol (DMQH2) during ubiquinone biosynthesis. Also catalyzes the hydroxylation of the 5-methoxy-2-methyl-3-(all-trans-polyprenyl)benzoquinone at the C6 position and participates in the biosynthesis of ubiquinone. Also has a structural role in the COQ enzyme complex, stabilizing COQ3 and COQ4 polypeptides. The protein is 5-demethoxyubiquinone hydroxylase, mitochondrial of Saccharomyces cerevisiae (strain ATCC 204508 / S288c) (Baker's yeast).